A 484-amino-acid polypeptide reads, in one-letter code: Fork head protein homolog 1 (484 aa).

The FHA domain maps to 76 to 142 (VTIGRNTDSL…NGAKVNFRRI (67 aa)). Residues 302–393 (IKPPQSYASM…RRDFLNKWNA (92 aa)) constitute a DNA-binding region (fork-head).

As to quaternary structure, interacts (via FHA domain) with ECM30, GLN3, URE2, MPH1 AND FDO1. Interacts with the origin recognition complex (ORC) composed of ORC1 to ORC6.

It is found in the nucleus. It localises to the cytoplasm. The protein localises to the cytosol. Transcription factor that regulates the expression of the CLB2 cluster of genes during the G2/M phase of the mitotic cell cycle. The CLB2 cluster of genes includes mitotic regulators such as CLB1, CLB2, CDC5 and CDC20 as well as SWI5 and ACE2, transcription factors required for the subsequent temporal wave of cell cycle regulated gene expression in the M/G1 phase interval. Involved in HMRa silencing. FKH1 and FKH2 associate with the coding regions of active genes and influence, in opposing ways, transcriptional elongation and termination, and coordinate early transcription elongation and pre-mRNA processing. Both FKH1 and FKH2 play a role as regulators of lifespan in collaboration with the anaphase-promoting complex (APC), likely through combined regulation of stress response, genomic stability, and cell cycle regulation. FKH1 and FKH2 function also in controlling yeast cell morphology by preventing preudohyphal growth. Acts as a rate-limiting replication origin activator via its interaction with the origin recognition complex (ORC). Plays a transcription-independent role in recombination donor preference during mating-type switching through binding to the recombination enhancer (RE), a 700-bp cis-acting element that controls recombination along the left arm of chromosome III. The sequence is that of Fork head protein homolog 1 from Saccharomyces cerevisiae (strain ATCC 204508 / S288c) (Baker's yeast).